We begin with the raw amino-acid sequence, 98 residues long: VQ motif-containing protein 1 (98 aa).

Positions 27–36 (FKTIVQELTG) match the VQ motif.

Interacts with WRKY33.

The protein localises to the nucleus. In terms of biological role, may modulate WRKY transcription factor activities. This Arabidopsis thaliana (Mouse-ear cress) protein is VQ motif-containing protein 1.